The primary structure comprises 193 residues: Peptidyl-tRNA hydrolase (193 aa).

Tyrosine 14 lines the tRNA pocket. Histidine 19 serves as the catalytic Proton acceptor. TRNA-binding residues include phenylalanine 64, asparagine 66, and asparagine 112.

This sequence belongs to the PTH family. In terms of assembly, monomer.

The protein resides in the cytoplasm. The enzyme catalyses an N-acyl-L-alpha-aminoacyl-tRNA + H2O = an N-acyl-L-amino acid + a tRNA + H(+). Its function is as follows. Hydrolyzes ribosome-free peptidyl-tRNAs (with 1 or more amino acids incorporated), which drop off the ribosome during protein synthesis, or as a result of ribosome stalling. Catalyzes the release of premature peptidyl moieties from peptidyl-tRNA molecules trapped in stalled 50S ribosomal subunits, and thus maintains levels of free tRNAs and 50S ribosomes. The chain is Peptidyl-tRNA hydrolase from Bartonella bacilliformis (strain ATCC 35685 / KC583 / Herrer 020/F12,63).